The primary structure comprises 153 residues: Transcriptional repressor NrdR (153 aa).

Residues 3 to 34 (CPFCNNINTQVKDSRAIEDDILIRRRRICLVC) fold into a zinc finger. The region spanning 49-139 (FMVIKKNGET…VYMNFKNIND (91 aa)) is the ATP-cone domain.

The protein belongs to the NrdR family. It depends on Zn(2+) as a cofactor.

Its function is as follows. Negatively regulates transcription of bacterial ribonucleotide reductase nrd genes and operons by binding to NrdR-boxes. The polypeptide is Transcriptional repressor NrdR (Ehrlichia canis (strain Jake)).